The sequence spans 615 residues: Dihydroxy-acid dehydratase (615 aa).

Asp83 is a binding site for Mg(2+). Residue Cys124 coordinates [2Fe-2S] cluster. The Mg(2+) site is built by Asp125 and Lys126. Lys126 is modified (N6-carboxylysine). Cys199 provides a ligand contact to [2Fe-2S] cluster. Glu495 provides a ligand contact to Mg(2+). Catalysis depends on Ser521, which acts as the Proton acceptor.

Belongs to the IlvD/Edd family. Homodimer. It depends on [2Fe-2S] cluster as a cofactor. Mg(2+) is required as a cofactor.

It catalyses the reaction (2R)-2,3-dihydroxy-3-methylbutanoate = 3-methyl-2-oxobutanoate + H2O. It carries out the reaction (2R,3R)-2,3-dihydroxy-3-methylpentanoate = (S)-3-methyl-2-oxopentanoate + H2O. The protein operates within amino-acid biosynthesis; L-isoleucine biosynthesis; L-isoleucine from 2-oxobutanoate: step 3/4. Its pathway is amino-acid biosynthesis; L-valine biosynthesis; L-valine from pyruvate: step 3/4. Functions in the biosynthesis of branched-chain amino acids. Catalyzes the dehydration of (2R,3R)-2,3-dihydroxy-3-methylpentanoate (2,3-dihydroxy-3-methylvalerate) into 2-oxo-3-methylpentanoate (2-oxo-3-methylvalerate) and of (2R)-2,3-dihydroxy-3-methylbutanoate (2,3-dihydroxyisovalerate) into 2-oxo-3-methylbutanoate (2-oxoisovalerate), the penultimate precursor to L-isoleucine and L-valine, respectively. The protein is Dihydroxy-acid dehydratase of Corynebacterium jeikeium (strain K411).